The sequence spans 1648 residues: Putative 1-phosphatidylinositol-3-phosphate 5-kinase FAB1C (1648 aa).

Basic and acidic residues predominate over residues 97–106 (YDKVHPRDSP). Disordered regions lie at residues 97–116 (YDKV…ATES), 241–276 (QEDH…NDDA), 721–746 (SEIP…ENQL), and 1083–1139 (KTGD…GTSL). Basic and acidic residues predominate over residues 1084–1130 (TGDDNAPRNPEMHDPPKIDRRMQEGSDERDEQSHTDSEANGDNKDPE). The 324-residue stretch at 1316 to 1639 (NLNNRESEPS…RFRKAMTTYF (324 aa)) folds into the PIPK domain.

As to quaternary structure, component of the PI(3,5)P2 regulatory complex at least composed of ATG18, SAC/FIG4, FAB1 and VAC14. The cofactor is Mg(2+). Mn(2+) is required as a cofactor.

The catalysed reaction is a 1,2-diacyl-sn-glycero-3-phospho-(1D-myo-inositol-3-phosphate) + ATP = a 1,2-diacyl-sn-glycero-3-phospho-(1D-myo-inositol-3,5-bisphosphate) + ADP + H(+). Its function is as follows. The PI(3,5)P2 regulatory complex regulates both the synthesis and turnover of phosphatidylinositol 3,5-bisphosphate (PtdIns(3,5)P2). Catalyzes the phosphorylation of phosphatidylinositol 3-phosphate on the fifth hydroxyl of the myo-inositol ring, to form phosphatidylinositol 3,5-bisphosphate. The protein is Putative 1-phosphatidylinositol-3-phosphate 5-kinase FAB1C (FAB1C) of Arabidopsis thaliana (Mouse-ear cress).